The following is a 174-amino-acid chain: Ribulose bisphosphate carboxylase small subunit, chloroplastic (174 aa).

The transit peptide at 1–45 directs the protein to the chloroplast; it reads MAPTVMASSATSVAPFQGLKSTAGLPVSRRSNASSASVSNGGRIR.

Belongs to the RuBisCO small chain family. In terms of assembly, heterohexadecamer of 8 large and 8 small subunits.

It is found in the plastid. Its subcellular location is the chloroplast. Its function is as follows. RuBisCO catalyzes two reactions: the carboxylation of D-ribulose 1,5-bisphosphate, the primary event in carbon dioxide fixation, as well as the oxidative fragmentation of the pentose substrate. Both reactions occur simultaneously and in competition at the same active site. Although the small subunit is not catalytic it is essential for maximal activity. In Hordeum vulgare (Barley), this protein is Ribulose bisphosphate carboxylase small subunit, chloroplastic.